A 116-amino-acid polypeptide reads, in one-letter code: Small ribosomal subunit protein uS13m (116 aa).

It belongs to the universal ribosomal protein uS13 family. As to quaternary structure, part of the small ribosomal subunit.

It localises to the mitochondrion. Its function is as follows. Located at the top of the head of the small subunit, it contacts several helices of the 18S rRNA. The sequence is that of Small ribosomal subunit protein uS13m (RPS13) from Daucus carota (Wild carrot).